The sequence spans 481 residues: Chromosomal replication initiator protein DnaA (481 aa).

A domain I, interacts with DnaA modulators region spans residues 1 to 74 (MSQDLWSFCL…ELGAEFHGAP (74 aa)). Residues 74–144 (PIEIELVLPA…TASDLAYEKT (71 aa)) are domain II. Positions 101–123 (AGPAPAPTPSQAPAATAAAPAVV) are disordered. Residues 111–123 (QAPAATAAAPAVV) are compositionally biased toward low complexity. A domain III, AAA+ region region spans residues 145-361 (RLNADFTFDT…GALNKVVAFA (217 aa)). Residues glycine 189, glycine 191, lysine 192, and threonine 193 each contribute to the ATP site. The segment at 362–481 (RFHGRGITLE…VHVLTQVLRG (120 aa)) is domain IV, binds dsDNA.

Belongs to the DnaA family. In terms of assembly, oligomerizes as a right-handed, spiral filament on DNA at oriC.

The protein localises to the cytoplasm. Its function is as follows. Plays an essential role in the initiation and regulation of chromosomal replication. ATP-DnaA binds to the origin of replication (oriC) to initiate formation of the DNA replication initiation complex once per cell cycle. Binds the DnaA box (a 9 base pair repeat at the origin) and separates the double-stranded (ds)DNA. Forms a right-handed helical filament on oriC DNA; dsDNA binds to the exterior of the filament while single-stranded (ss)DNA is stabiized in the filament's interior. The ATP-DnaA-oriC complex binds and stabilizes one strand of the AT-rich DNA unwinding element (DUE), permitting loading of DNA polymerase. After initiation quickly degrades to an ADP-DnaA complex that is not apt for DNA replication. Binds acidic phospholipids. The protein is Chromosomal replication initiator protein DnaA of Aromatoleum aromaticum (strain DSM 19018 / LMG 30748 / EbN1) (Azoarcus sp. (strain EbN1)).